A 160-amino-acid polypeptide reads, in one-letter code: uncharacterized protein (160 aa).

An N-terminal signal peptide occupies residues 1–29; that stretch reads MTGKTHIMGGIASCTAAAYYYGFDPVLMA. The next 2 membrane-spanning stretches (helical) occupy residues 67-87 and 137-157; these read TFTH…TYIP and QLVL…LFHG.

This sequence to E.coli YdjM.

The protein localises to the cell membrane. This is an uncharacterized protein from Bacillus subtilis (strain 168).